The primary structure comprises 120 residues: U-scoloptoxin(16)-Er2a (120 aa).

An N-terminal signal peptide occupies residues 1-26; the sequence is MNTVSVVQFLAVGCAVFVLYGRGVFA.

It belongs to the scoloptoxin-16 family. In terms of processing, contains 4 disulfide bonds. Expressed by the venom gland.

It is found in the secreted. In Ethmostigmus rubripes (Giant centipede), this protein is U-scoloptoxin(16)-Er2a.